Here is a 644-residue protein sequence, read N- to C-terminus: Protein lin-9 (644 aa).

Positions 1 to 77 (MSSAVRSPRK…GRDSPSVNSL (77 aa)) are disordered. Residues 50-62 (SIKRTGSPKKSPA) show a composition bias toward basic residues.

The protein belongs to the lin-9 family. Component of the DRM complex, at least composed of lin-9, lin-35, lin-37, lin-52, lin-53, lin-54- dpl-1 and efl-1. Interacts with zft-11; the interaction is required to suppress the activation of non-neuronal genes in neurons.

The protein resides in the nucleus. Its function is as follows. Synthetic multivulva class B (synMuvB) protein. SynMuvB proteins are required to repress the induction of vulval development by Ras signaling and probably act by forming the multiprotein DRM complex that represses transcription. Required for the development of sheath cells in the hermaphrodite gonad and for the development of the male spicule, rays and gonad. In association with the zinc finger protein ztf-11, negatively regulates the expression of non-neuronal genes during neurogenesis. This is Protein lin-9 from Caenorhabditis elegans.